Here is a 203-residue protein sequence, read N- to C-terminus: Outer-membrane lipoprotein LolB (203 aa).

The N-terminal stretch at 1 to 21 is a signal peptide; sequence MRLSASLFHIALVTVLLVLAG. Residue Cys-22 is the site of N-palmitoyl cysteine attachment. A lipid anchor (S-diacylglycerol cysteine) is attached at Cys-22.

It belongs to the LolB family. Monomer.

The protein resides in the cell outer membrane. Functionally, plays a critical role in the incorporation of lipoproteins in the outer membrane after they are released by the LolA protein. This chain is Outer-membrane lipoprotein LolB, found in Shewanella frigidimarina (strain NCIMB 400).